The primary structure comprises 362 residues: S-adenosylmethionine decarboxylase proenzyme (362 aa).

Active-site residues include Glu11 and Glu14. Residue Ser71 is the Schiff-base intermediate with substrate; via pyruvic acid of the active site. Pyruvic acid (Ser); by autocatalysis is present on Ser71. Cys85 functions as the Proton donor; for catalytic activity in the catalytic mechanism. Residues Ser234 and His247 each act as proton acceptor; for processing activity in the active site.

Belongs to the eukaryotic AdoMetDC family. The cofactor is pyruvate. Is synthesized initially as an inactive proenzyme. Formation of the active enzyme involves a self-maturation process in which the active site pyruvoyl group is generated from an internal serine residue via an autocatalytic post-translational modification. Two non-identical subunits are generated from the proenzyme in this reaction, and the pyruvate is formed at the N-terminus of the alpha chain, which is derived from the carboxyl end of the proenzyme. The post-translation cleavage follows an unusual pathway, termed non-hydrolytic serinolysis, in which the side chain hydroxyl group of the serine supplies its oxygen atom to form the C-terminus of the beta chain, while the remainder of the serine residue undergoes an oxidative deamination to produce ammonia and the pyruvoyl group blocking the N-terminus of the alpha chain.

The enzyme catalyses S-adenosyl-L-methionine + H(+) = S-adenosyl 3-(methylsulfanyl)propylamine + CO2. It functions in the pathway amine and polyamine biosynthesis; S-adenosylmethioninamine biosynthesis; S-adenosylmethioninamine from S-adenosyl-L-methionine: step 1/1. This Ipomoea batatas (Sweet potato) protein is S-adenosylmethionine decarboxylase proenzyme (SAMDC).